We begin with the raw amino-acid sequence, 72 residues long: Translation initiation factor IF-1 (72 aa).

Residues 1 to 72 (MAKDGVIEVE…NRGRITYRYK (72 aa)) enclose the S1-like domain.

The protein belongs to the IF-1 family. Component of the 30S ribosomal translation pre-initiation complex which assembles on the 30S ribosome in the order IF-2 and IF-3, IF-1 and N-formylmethionyl-tRNA(fMet); mRNA recruitment can occur at any time during PIC assembly.

The protein resides in the cytoplasm. Functionally, one of the essential components for the initiation of protein synthesis. Stabilizes the binding of IF-2 and IF-3 on the 30S subunit to which N-formylmethionyl-tRNA(fMet) subsequently binds. Helps modulate mRNA selection, yielding the 30S pre-initiation complex (PIC). Upon addition of the 50S ribosomal subunit IF-1, IF-2 and IF-3 are released leaving the mature 70S translation initiation complex. This is Translation initiation factor IF-1 from Bifidobacterium adolescentis (strain ATCC 15703 / DSM 20083 / NCTC 11814 / E194a).